Reading from the N-terminus, the 356-residue chain is Protein-glutamate methylesterase/protein-glutamine glutaminase 2 (356 aa).

A Response regulatory domain is found at 7-124; sequence KVLCVDDSAL…RDGLMEYTDT (118 aa). The residue at position 58 (aspartate 58) is a 4-aspartylphosphate. Residues 157 to 349 enclose the CheB-type methylesterase domain; sequence LLSTEKLIIL…QRVMARLATY (193 aa). Active-site residues include serine 169, histidine 195, and aspartate 291.

The protein belongs to the CheB family. In terms of processing, phosphorylated by CheA. Phosphorylation of the N-terminal regulatory domain activates the methylesterase activity.

Its subcellular location is the cytoplasm. It catalyses the reaction [protein]-L-glutamate 5-O-methyl ester + H2O = L-glutamyl-[protein] + methanol + H(+). The catalysed reaction is L-glutaminyl-[protein] + H2O = L-glutamyl-[protein] + NH4(+). Functionally, involved in chemotaxis. Part of a chemotaxis signal transduction system that modulates chemotaxis in response to various stimuli. Catalyzes the demethylation of specific methylglutamate residues introduced into the chemoreceptors (methyl-accepting chemotaxis proteins or MCP) by CheR. Also mediates the irreversible deamidation of specific glutamine residues to glutamic acid. The polypeptide is Protein-glutamate methylesterase/protein-glutamine glutaminase 2 (Cupriavidus pinatubonensis (strain JMP 134 / LMG 1197) (Cupriavidus necator (strain JMP 134))).